Reading from the N-terminus, the 242-residue chain is tRNA pseudouridine synthase A (242 aa).

The Nucleophile role is filled by Asp51. Tyr107 contributes to the substrate binding site.

It belongs to the tRNA pseudouridine synthase TruA family. In terms of assembly, homodimer.

The enzyme catalyses uridine(38/39/40) in tRNA = pseudouridine(38/39/40) in tRNA. Its function is as follows. Formation of pseudouridine at positions 38, 39 and 40 in the anticodon stem and loop of transfer RNAs. This chain is tRNA pseudouridine synthase A, found in Helicobacter pylori (strain P12).